The primary structure comprises 451 residues: Phosphoglucosamine mutase (451 aa).

Serine 101 acts as the Phosphoserine intermediate in catalysis. Residues serine 101, aspartate 242, aspartate 244, and aspartate 246 each contribute to the Mg(2+) site. At serine 101 the chain carries Phosphoserine.

Belongs to the phosphohexose mutase family. It depends on Mg(2+) as a cofactor. In terms of processing, activated by phosphorylation.

The catalysed reaction is alpha-D-glucosamine 1-phosphate = D-glucosamine 6-phosphate. Its function is as follows. Catalyzes the conversion of glucosamine-6-phosphate to glucosamine-1-phosphate. In Beijerinckia indica subsp. indica (strain ATCC 9039 / DSM 1715 / NCIMB 8712), this protein is Phosphoglucosamine mutase.